The chain runs to 228 residues: Ankyrin repeat domain-containing protein 46 (228 aa).

4 ANK repeats span residues 11 to 40, 44 to 73, 77 to 103, and 107 to 138; these read QTSVPLLQACIDGDLSFARRLLETGCDPNI, RGRTGLHLAAARGNVDICRFLHKFGADLLA, QGNTALHLCGHVDTIQFLVSNGLKIDI, and NGSTPLVLAKRRGVNKDAIRLLEGLEEQEVKG. The chain crosses the membrane as a helical span at residues 195-215; sequence VLLLLVVIALLSLGIAYYVSG.

The protein resides in the membrane. This chain is Ankyrin repeat domain-containing protein 46 (ankrd46), found in Danio rerio (Zebrafish).